A 377-amino-acid polypeptide reads, in one-letter code: Secreted LysM effector Lys2 (377 aa).

The signal sequence occupies residues 1 to 22 (MVRQSIGLIALQLLNLVSVAQA). Low complexity predominate over residues 104-119 (TSSSTATTTSQKPTAT). A disordered region spans residues 104–124 (TSSSTATTTSQKPTATVSPLP). 2 LysM domains span residues 135-182 (KYYN…YVCV) and 207-253 (KYYK…YYCV).

The protein belongs to the secreted LysM effector family.

Its function is as follows. Might have a role in sequestration of chitin oligosaccharides (breakdown products of fungal cell walls that are released during invasion and act as triggers of host immunity) to dampen host defense. The sequence is that of Secreted LysM effector Lys2 from Pochonia chlamydosporia (strain 123) (Metacordyceps chlamydosporia).